We begin with the raw amino-acid sequence, 73 residues long: Beta-defensin 40 (73 aa).

Residues Met1–Val23 form the signal peptide. 3 cysteine pairs are disulfide-bonded: Cys29-Cys58, Cys36-Cys51, and Cys41-Cys59.

Belongs to the beta-defensin family. In terms of tissue distribution, only expressed in epididymis (corpus, cauda and caput).

Its subcellular location is the secreted. In terms of biological role, has antibacterial activity. In Mus musculus (Mouse), this protein is Beta-defensin 40 (Defb40).